A 500-amino-acid polypeptide reads, in one-letter code: Cobyric acid synthase (500 aa).

Residues 255–444 (AIDIAVIRCP…MHDLFHNDAF (190 aa)) form the GATase cobBQ-type domain. The active-site Nucleophile is Cys-337. His-436 is a catalytic residue.

This sequence belongs to the CobB/CobQ family. CobQ subfamily.

It functions in the pathway cofactor biosynthesis; adenosylcobalamin biosynthesis. Functionally, catalyzes amidations at positions B, D, E, and G on adenosylcobyrinic A,C-diamide. NH(2) groups are provided by glutamine, and one molecule of ATP is hydrogenolyzed for each amidation. In Geobacillus thermodenitrificans (strain NG80-2), this protein is Cobyric acid synthase.